A 621-amino-acid polypeptide reads, in one-letter code: MFPEYDVIVVGAGHAGCEAAAAAANMGSKVLLATMNMQTIAQMSCNPAMGGVAKGQIVREIDALGGLSGIVSDKSMIQFRMLNRSKGPAMWSPRSQNDRHMFAWEWRMQLEALPNVDFWQEMISGLIVKNGKVCGVRTGLGIEIPCKSVVLTNGTFLNGIIHIGEKKLGGGRTGEKAATGITEQLVELGFESGRMKTGTPPRVDGRSLDYSVMQEQEGDENPSKFSYSKQTTSLTKQRSCHITYTNQAVHDTLKEGFDRSPMFTGRIKGLGPRYCPSVEDKINRFAEKERHQIFVEPEGWNTVEVYVNGFSTSLPEDVQYKAIRKIAGFENAKMFRPGYAIEYDFFPPTQLQLSLETRLVKNLFFAGQINGTTGYEEAACQGLMAGINAHKAAKDHEALILKRSEAYIGVLIDDLVNKGTEEPYRMFTSRAEYRILLRQDNADLRLTPIGYEIGLATEERYQDMLLKKHNSEKLVEEIKNTKIKPETANEILEENGSAPIKEKVVLYNLLKRPNMEVSLFAEKVEEIKTLIEPYTQEEIEQAMIEVKYRDYIDKEEQMALKMTQLENMALNPDFDYKKIQALSLEAREKLSKLKPATLGQASRISGVNPADISILMIYMGR.

Position 11–16 (11–16 (GAGHAG)) interacts with FAD. 271-285 (GPRYCPSVEDKINRF) is a binding site for NAD(+).

This sequence belongs to the MnmG family. As to quaternary structure, homodimer. Heterotetramer of two MnmE and two MnmG subunits. FAD serves as cofactor.

Its subcellular location is the cytoplasm. NAD-binding protein involved in the addition of a carboxymethylaminomethyl (cmnm) group at the wobble position (U34) of certain tRNAs, forming tRNA-cmnm(5)s(2)U34. The chain is tRNA uridine 5-carboxymethylaminomethyl modification enzyme MnmG from Cytophaga hutchinsonii (strain ATCC 33406 / DSM 1761 / CIP 103989 / NBRC 15051 / NCIMB 9469 / D465).